A 208-amino-acid polypeptide reads, in one-letter code: High frequency lysogenization protein HflD homolog (208 aa).

Belongs to the HflD family.

The protein resides in the cytoplasm. It localises to the cell inner membrane. The chain is High frequency lysogenization protein HflD homolog from Yersinia pestis bv. Antiqua (strain Nepal516).